Here is a 250-residue protein sequence, read N- to C-terminus: Probable septum site-determining protein MinC (250 aa).

The interval 110-143 (SGARERPLEPEPEVVKKPEPAPAPPPPPEPEVRP) is disordered. The segment covering 112-128 (ARERPLEPEPEVVKKPE) has biased composition (basic and acidic residues). Positions 129–138 (PAPAPPPPPE) are enriched in pro residues.

The protein belongs to the MinC family. As to quaternary structure, interacts with MinD and FtsZ.

Cell division inhibitor that blocks the formation of polar Z ring septums. Rapidly oscillates between the poles of the cell to destabilize FtsZ filaments that have formed before they mature into polar Z rings. Prevents FtsZ polymerization. This is Probable septum site-determining protein MinC from Pseudomonas putida (strain ATCC 47054 / DSM 6125 / CFBP 8728 / NCIMB 11950 / KT2440).